The following is a 199-amino-acid chain: UPF0316 protein LA_0606 (199 aa).

A run of 2 helical transmembrane segments spans residues 47-67 (IAAS…TQVI) and 73-93 (VFCY…GMIL).

It belongs to the UPF0316 family.

The protein resides in the cell membrane. This chain is UPF0316 protein LA_0606, found in Leptospira interrogans serogroup Icterohaemorrhagiae serovar Lai (strain 56601).